Consider the following 263-residue polypeptide: Small ribosomal subunit protein eS4, Y isoform 1 (263 aa).

The 63-residue stretch at 42–104 (LPLIVFLRNR…TGEHFRLVYD (63 aa)) folds into the S4 RNA-binding domain.

This sequence belongs to the eukaryotic ribosomal protein eS4 family.

The chain is Small ribosomal subunit protein eS4, Y isoform 1 (RPS4Y1) from Homo sapiens (Human).